Consider the following 159-residue polypeptide: 17.7 kDa class I heat shock protein (159 aa).

Residues 45 to 159 form the sHSP domain; the sequence is DAAAFAGARI…PDVKSIQISG (115 aa).

Belongs to the small heat shock protein (HSP20) family. May form oligomeric structures.

Its subcellular location is the cytoplasm. This chain is 17.7 kDa class I heat shock protein (HSP17.7), found in Oryza sativa subsp. japonica (Rice).